A 150-amino-acid chain; its full sequence is Large ribosomal subunit protein bL9 (150 aa).

It belongs to the bacterial ribosomal protein bL9 family.

In terms of biological role, binds to the 23S rRNA. This Streptococcus pyogenes serotype M18 (strain MGAS8232) protein is Large ribosomal subunit protein bL9.